The chain runs to 336 residues: DNA-directed RNA polymerase subunit alpha (336 aa).

An alpha N-terminal domain (alpha-NTD) region spans residues 1–232; sequence MIQKNWQELI…DQLGVFVNFD (232 aa). The segment at 248 to 336 is alpha C-terminal domain (alpha-CTD); that stretch reads FNPALLKKVD…DLAKRYEDQY (89 aa).

It belongs to the RNA polymerase alpha chain family. As to quaternary structure, homodimer. The RNAP catalytic core consists of 2 alpha, 1 beta, 1 beta' and 1 omega subunit. When a sigma factor is associated with the core the holoenzyme is formed, which can initiate transcription.

It catalyses the reaction RNA(n) + a ribonucleoside 5'-triphosphate = RNA(n+1) + diphosphate. DNA-dependent RNA polymerase catalyzes the transcription of DNA into RNA using the four ribonucleoside triphosphates as substrates. This Rhizobium radiobacter (Agrobacterium tumefaciens) protein is DNA-directed RNA polymerase subunit alpha.